The following is a 559-amino-acid chain: POU domain protein 1 (559 aa).

Positions 259 to 333 (EDLPSSDDLE…LLQKWLHEAD (75 aa)) constitute a POU-specific domain. Positions 351–410 (KRKKRTSIEANVKSILESSFMKLSKPSAQDISSLAEKLSLEKEVVRVWFCNRRQKEKRIT) form a DNA-binding region, homeobox.

This sequence belongs to the POU transcription factor family.

Its subcellular location is the nucleus. The protein is POU domain protein 1 (POU1) of Dugesia japonica (Planarian).